The sequence spans 35 residues: Photosystem II reaction center protein T (35 aa).

The helical transmembrane segment at 3-23 threads the bilayer; that stretch reads ALVYTFLLVSTLGIIFFAIFF.

The protein belongs to the PsbT family. In terms of assembly, PSII is composed of 1 copy each of membrane proteins PsbA, PsbB, PsbC, PsbD, PsbE, PsbF, PsbH, PsbI, PsbJ, PsbK, PsbL, PsbM, PsbT, PsbY, PsbZ, Psb30/Ycf12, at least 3 peripheral proteins of the oxygen-evolving complex and a large number of cofactors. It forms dimeric complexes.

It localises to the plastid. Its subcellular location is the chloroplast thylakoid membrane. In terms of biological role, found at the monomer-monomer interface of the photosystem II (PS II) dimer, plays a role in assembly and dimerization of PSII. PSII is a light-driven water plastoquinone oxidoreductase, using light energy to abstract electrons from H(2)O, generating a proton gradient subsequently used for ATP formation. The sequence is that of Photosystem II reaction center protein T from Pisum sativum (Garden pea).